The primary structure comprises 506 residues: Chaperone SurA (506 aa).

Positions 1–29 (MMRRLHSSRRFSGSLLALALGLALPLAHA) are cleaved as a signal peptide. 2 consecutive PpiC domains span residues 219 to 320 (PVML…KVLQ) and 351 to 450 (VTQT…QVLE).

Its subcellular location is the periplasm. It carries out the reaction [protein]-peptidylproline (omega=180) = [protein]-peptidylproline (omega=0). Chaperone involved in the correct folding and assembly of outer membrane proteins. Recognizes specific patterns of aromatic residues and the orientation of their side chains, which are found more frequently in integral outer membrane proteins. May act in both early periplasmic and late outer membrane-associated steps of protein maturation. This is Chaperone SurA from Bordetella avium (strain 197N).